The chain runs to 592 residues: Aspartate--tRNA(Asp/Asn) ligase (592 aa).

Residue glutamate 171 coordinates L-aspartate. Positions 195–198 are aspartate; the sequence is QLFK. Arginine 217 is an L-aspartate binding site. ATP contacts are provided by residues 217–219 and glutamine 226; that span reads RDE. Residue histidine 447 coordinates L-aspartate. Position 481 (glutamate 481) interacts with ATP. Arginine 488 is a binding site for L-aspartate. Residue 533–536 participates in ATP binding; it reads GLDR.

Belongs to the class-II aminoacyl-tRNA synthetase family. Type 1 subfamily. Homodimer.

The protein localises to the cytoplasm. It catalyses the reaction tRNA(Asx) + L-aspartate + ATP = L-aspartyl-tRNA(Asx) + AMP + diphosphate. Functionally, aspartyl-tRNA synthetase with relaxed tRNA specificity since it is able to aspartylate not only its cognate tRNA(Asp) but also tRNA(Asn). Reaction proceeds in two steps: L-aspartate is first activated by ATP to form Asp-AMP and then transferred to the acceptor end of tRNA(Asp/Asn). This Psychromonas ingrahamii (strain DSM 17664 / CCUG 51855 / 37) protein is Aspartate--tRNA(Asp/Asn) ligase.